The sequence spans 392 residues: Alkaline phosphatase L (392 aa).

Residues 1–23 form the signal peptide; the sequence is MYKRSLIAASLSVAALVSAQAMA.

It belongs to the PstS family. Homodimer.

The protein resides in the secreted. The protein localises to the periplasm. The enzyme catalyses a phosphate monoester + H2O = an alcohol + phosphate. Functionally, has both a phosphomonoesterase and phosphodiesterase activity. In Pseudomonas aeruginosa, this protein is Alkaline phosphatase L.